Reading from the N-terminus, the 413-residue chain is 2,3-bisphosphoglycerate-independent phosphoglycerate mutase (413 aa).

Belongs to the BPG-independent phosphoglycerate mutase family. A-PGAM subfamily.

It carries out the reaction (2R)-2-phosphoglycerate = (2R)-3-phosphoglycerate. It participates in carbohydrate degradation; glycolysis; pyruvate from D-glyceraldehyde 3-phosphate: step 3/5. Functionally, catalyzes the interconversion of 2-phosphoglycerate and 3-phosphoglycerate. The protein is 2,3-bisphosphoglycerate-independent phosphoglycerate mutase of Metallosphaera sedula (strain ATCC 51363 / DSM 5348 / JCM 9185 / NBRC 15509 / TH2).